The following is a 688-amino-acid chain: Protein sel-1 homolog 2 (688 aa).

Residues Met-1–Thr-18 form the signal peptide. Residues Lys-19–Thr-662 are Extracellular-facing. Residue Asn-34 is glycosylated (N-linked (GlcNAc...) asparagine). 11 Sel1-like repeats span residues Gly-107–Asn-142, Leu-143–Ser-178, Tyr-179–Ser-214, Met-215–Ala-250, Val-297–Ser-333, Ala-334–Asn-370, Ala-371–Trp-406, Pro-407–Gln-442, Pro-443–His-478, Ala-551–His-586, and Ala-588–Pro-623. Asn-162 carries N-linked (GlcNAc...) asparagine glycosylation. The helical transmembrane segment at Ile-663–Leu-683 threads the bilayer. Over Arg-684–Arg-688 the chain is Cytoplasmic.

This sequence belongs to the sel-1 family.

It localises to the membrane. Its subcellular location is the cell projection. The protein localises to the cilium. The protein resides in the nucleus speckle. The polypeptide is Protein sel-1 homolog 2 (Sel1l2) (Rattus norvegicus (Rat)).